Consider the following 770-residue polypeptide: MAKKNRLNTTQRKTLRQKEDEYIENLKTKIDEYDPKITKAKFFKDLPISDPTLKGLRESSFIKLTEIQADSIPVSLQGHDVLAAAKTGSGKTLAFLVPVIEKLYREKWTEFDGLGALIISPTRELAMQIYEVLTKIGSHTSFSAGLVIGGKDVKFELERISRINILIGTPGRILQHLDQAVGLNTSNLQMLVLDEADRCLDMGFKKTLDAIVSTLSPSRQTLLFSATQSQSVADLARLSLTDYKTVGTHDVMDGSVNKEASTPETLQQFYIEVPLADKLDILFSFIKSHLKCKMIVFLSSSKQVHFVYETFRKMQPGISLMHLHGRQKQRARTETLDKFNRAQQVCLFATDVVARGIDFPAVDWVVQVDCPEDVDTYIHRVGRCARYGKKGKSLIMLTPQEQEAFLKRLNARKIEPGKLNIKQSKKKSIKPQLQSLLFKDPELKYLGQKAFISYVRSIYVQKDKQVFKFDELPTEEFAYSLGLPGAPKIKMKGMKTIEQAKERKNAPRQLAFLSKANEDGEVIEDKSKQPRTKYDKMFERKNQTILSEHYLNITKAQAQEDEDDDFISVKRKDHEINEAELPALTLPTSRRAQKKALSKKASLASKGNASKLIFDDEGEAHPVYELEDEEEFHKRGDAEVQKTEFLTKESAVMADIDNIDKQVAKEKKQEKKRKRLEAMRREMEAAMEEEISGDEEEGKTVAYLGTGNLSDDMSDGDMPDSEGHLKKKARTVDYSHGHNPSNSVDDDIIEVEEPQTLEDLESLTAKLIQG.

Positions 41 to 69 (KFFKDLPISDPTLKGLRESSFIKLTEIQA) match the Q motif motif. The Helicase ATP-binding domain maps to 72–246 (IPVSLQGHDV…RLSLTDYKTV (175 aa)). 85–92 (AKTGSGKT) provides a ligand contact to ATP. A DEAD box motif is present at residues 194-197 (DEAD). In terms of domain architecture, Helicase C-terminal spans 278-437 (KLDILFSFIK…SIKPQLQSLL (160 aa)). A phosphoserine mark is found at Ser-692, Ser-710, Ser-714, and Ser-743. Positions 705–724 (GTGNLSDDMSDGDMPDSEGH) are disordered.

This sequence belongs to the DEAD box helicase family. DDX10/DBP4 subfamily. As to quaternary structure, interacts with the U3 and U14 snoRNAs. Associates with pre-ribosomal complexes.

It is found in the nucleus. Its subcellular location is the nucleolus. The enzyme catalyses ATP + H2O = ADP + phosphate + H(+). Functionally, ATP-dependent RNA helicase required for ribosome biogenesis. Involved in the release of U14 snoRNA in pre-ribosomal complexes. Required for pre-rRNA cleavage at site A2. This Saccharomyces cerevisiae (strain ATCC 204508 / S288c) (Baker's yeast) protein is ATP-dependent RNA helicase HCA4 (HCA4).